We begin with the raw amino-acid sequence, 177 residues long: Large ribosomal subunit protein uL6 (177 aa).

It belongs to the universal ribosomal protein uL6 family. As to quaternary structure, part of the 50S ribosomal subunit.

In terms of biological role, this protein binds to the 23S rRNA, and is important in its secondary structure. It is located near the subunit interface in the base of the L7/L12 stalk, and near the tRNA binding site of the peptidyltransferase center. The sequence is that of Large ribosomal subunit protein uL6 from Bordetella pertussis (strain Tohama I / ATCC BAA-589 / NCTC 13251).